The following is a 365-amino-acid chain: Baculoviral IAP repeat-containing protein 7 (365 aa).

2 BIR repeats span residues 7-73 (RQRS…PFLQ) and 115-180 (RLGS…DFLL). Residues C149, C152, H169, and C176 each contribute to the Zn(2+) site. The self-inhibits the anti-apoptotic function stretch occupies residues 186–234 (AFIRSVQESFFSSPETSPESVGSYEGSPVSSPGSPPVCPFLSTSVAQGA). A Phosphoserine modification is found at S198. A Phosphoserine; by MAPK1 modification is found at S202. S212 carries the phosphoserine modification. 2 positions are modified to phosphoserine; by MAPK1: S216 and S219. Positions 278–306 (TESVSVPRAPTQRERPEPPKEPAPPLSTE) are disordered. Over residues 288–297 (TQRERPEPPK) the composition is skewed to basic and acidic residues. Residues 318–353 (CKVCMDNDVSMVFVPCGHLVVCTECAPNLRHCPICR) form an RING-type zinc finger.

It belongs to the IAP family. Auto-ubiquitinated, and degraded in a 2-step mechanism; a caspase-independent first step and a caspase-dependent second step. Post-translationally, phosphorylated via MAPK-dependent and CDK-dependent pathways during oocyte maturation. Phosphorylation does not appear to affect caspase inhibition or autoubiquitination activity.

The protein resides in the cytoplasm. The catalysed reaction is S-ubiquitinyl-[E2 ubiquitin-conjugating enzyme]-L-cysteine + [acceptor protein]-L-lysine = [E2 ubiquitin-conjugating enzyme]-L-cysteine + N(6)-ubiquitinyl-[acceptor protein]-L-lysine.. Functionally, weak apoptotic suppressor. Has E3 ubiquitin-protein ligase activity. Weak inhibitor of caspase activity. The protein is Baculoviral IAP repeat-containing protein 7 (birc7) of Xenopus tropicalis (Western clawed frog).